The sequence spans 287 residues: Efem/EfeO family lipoprotein (287 aa).

The N-terminal stretch at Met-1–Ala-17 is a signal peptide. Cys-18 is lipidated: N-palmitoyl cysteine. Cys-18 carries S-diacylglycerol cysteine lipidation. The tract at residues Asn-20 to Lys-50 is disordered. Positions His-23–Gln-33 are enriched in basic and acidic residues.

It belongs to the EfeM/EfeO family.

The protein resides in the cell membrane. The polypeptide is Efem/EfeO family lipoprotein (Staphylococcus haemolyticus (strain JCSC1435)).